Here is a 229-residue protein sequence, read N- to C-terminus: Protein OPG034 (229 aa).

This sequence belongs to the orthopoxvirus OPG034 family.

This Vaccinia virus (strain Western Reserve) (VACV) protein is Protein OPG034 (OPG034).